The primary structure comprises 347 residues: 3-isopropylmalate dehydrogenase (347 aa).

Residues Arg94, Arg104, Arg128, and Asp219 each coordinate substrate. Mg(2+) contacts are provided by Asp219, Asp243, and Asp247. 279 to 291 is an NAD(+) binding site; sequence GSAPDIAGQGKAD.

It belongs to the isocitrate and isopropylmalate dehydrogenases family. LeuB type 2 subfamily. As to quaternary structure, homodimer. Mg(2+) serves as cofactor. Requires Mn(2+) as cofactor.

The protein resides in the cytoplasm. It carries out the reaction (2R,3S)-3-isopropylmalate + NAD(+) = 4-methyl-2-oxopentanoate + CO2 + NADH. The protein operates within amino-acid biosynthesis; L-leucine biosynthesis; L-leucine from 3-methyl-2-oxobutanoate: step 3/4. Functionally, catalyzes the oxidation of 3-carboxy-2-hydroxy-4-methylpentanoate (3-isopropylmalate) to 3-carboxy-4-methyl-2-oxopentanoate. The product decarboxylates to 4-methyl-2 oxopentanoate. The protein is 3-isopropylmalate dehydrogenase of Streptomyces griseus subsp. griseus (strain JCM 4626 / CBS 651.72 / NBRC 13350 / KCC S-0626 / ISP 5235).